We begin with the raw amino-acid sequence, 149 residues long: Secreted RxLR effector protein 17 (149 aa).

The N-terminal stretch at 1 to 24 is a signal peptide; it reads MRLFYFSAMSVIGLLARNNMVVVA. The RxLR-dEER motif lies at 52–78; the sequence is RSLRTREKDIQDSTVAKDDAIKVEEDR.

The protein belongs to the RxLR effector family.

It is found in the secreted. The protein localises to the host cytoplasm. It localises to the host nucleus. Its function is as follows. Effector that acts as a broad suppressor of cell death to interrupt plant immunity. Inhibits cell death induced by cell death-inducing proteins, including the PAMP elicitor INF1 from P.infestans. This chain is Secreted RxLR effector protein 17, found in Plasmopara viticola (Downy mildew of grapevine).